Here is a 315-residue protein sequence, read N- to C-terminus: Small ribosomal subunit protein uS2 (315 aa).

Positions 250 to 315 are disordered; sequence LLEQGDAAKA…TESEKAPVSE (66 aa). Composition is skewed to basic and acidic residues over residues 272 to 282 and 297 to 315; these read VSAKNEAKSED and TEAK…PVSE.

It belongs to the universal ribosomal protein uS2 family.

The sequence is that of Small ribosomal subunit protein uS2 from Clavibacter michiganensis subsp. michiganensis (strain NCPPB 382).